Reading from the N-terminus, the 427-residue chain is 3-phosphoshikimate 1-carboxyvinyltransferase (427 aa).

Residues Lys22, Ser23, and Arg27 each contribute to the 3-phosphoshikimate site. Lys22 serves as a coordination point for phosphoenolpyruvate. Residues Gly96 and Arg124 each coordinate phosphoenolpyruvate. 7 residues coordinate 3-phosphoshikimate: Ser169, Ser170, Gln171, Ser197, Asp313, Asn336, and Lys340. A phosphoenolpyruvate-binding site is contributed by Gln171. Asp313 serves as the catalytic Proton acceptor. 3 residues coordinate phosphoenolpyruvate: Arg344, Arg386, and Lys411.

The protein belongs to the EPSP synthase family. In terms of assembly, monomer.

Its subcellular location is the cytoplasm. The catalysed reaction is 3-phosphoshikimate + phosphoenolpyruvate = 5-O-(1-carboxyvinyl)-3-phosphoshikimate + phosphate. The protein operates within metabolic intermediate biosynthesis; chorismate biosynthesis; chorismate from D-erythrose 4-phosphate and phosphoenolpyruvate: step 6/7. Its function is as follows. Catalyzes the transfer of the enolpyruvyl moiety of phosphoenolpyruvate (PEP) to the 5-hydroxyl of shikimate-3-phosphate (S3P) to produce enolpyruvyl shikimate-3-phosphate and inorganic phosphate. This Escherichia coli O6:H1 (strain CFT073 / ATCC 700928 / UPEC) protein is 3-phosphoshikimate 1-carboxyvinyltransferase.